A 165-amino-acid chain; its full sequence is 2-C-methyl-D-erythritol 2,4-cyclodiphosphate synthase (165 aa).

Residues D8 and H10 each contribute to the a divalent metal cation site. 4-CDP-2-C-methyl-D-erythritol 2-phosphate-binding positions include 8–10 (DVH) and 34–35 (HS). An a divalent metal cation-binding site is contributed by H42. 4-CDP-2-C-methyl-D-erythritol 2-phosphate is bound by residues 56 to 58 (DIG), 61 to 65 (FPDTD), 100 to 106 (AQAPKMA), 132 to 135 (TTTE), F139, and R142.

This sequence belongs to the IspF family. As to quaternary structure, homotrimer. A divalent metal cation is required as a cofactor.

The catalysed reaction is 4-CDP-2-C-methyl-D-erythritol 2-phosphate = 2-C-methyl-D-erythritol 2,4-cyclic diphosphate + CMP. It participates in isoprenoid biosynthesis; isopentenyl diphosphate biosynthesis via DXP pathway; isopentenyl diphosphate from 1-deoxy-D-xylulose 5-phosphate: step 4/6. In terms of biological role, involved in the biosynthesis of isopentenyl diphosphate (IPP) and dimethylallyl diphosphate (DMAPP), two major building blocks of isoprenoid compounds. Catalyzes the conversion of 4-diphosphocytidyl-2-C-methyl-D-erythritol 2-phosphate (CDP-ME2P) to 2-C-methyl-D-erythritol 2,4-cyclodiphosphate (ME-CPP) with a corresponding release of cytidine 5-monophosphate (CMP). The polypeptide is 2-C-methyl-D-erythritol 2,4-cyclodiphosphate synthase (Pectobacterium atrosepticum (strain SCRI 1043 / ATCC BAA-672) (Erwinia carotovora subsp. atroseptica)).